Reading from the N-terminus, the 217-residue chain is Cytidylate kinase (217 aa).

21–29 contributes to the ATP binding site; sequence GPAASGKGT.

Belongs to the cytidylate kinase family. Type 1 subfamily.

It localises to the cytoplasm. It carries out the reaction CMP + ATP = CDP + ADP. The catalysed reaction is dCMP + ATP = dCDP + ADP. In Rickettsia bellii (strain OSU 85-389), this protein is Cytidylate kinase.